The primary structure comprises 389 residues: Nicotinate phosphoribosyltransferase (389 aa).

At H211 the chain carries Phosphohistidine; by autocatalysis.

This sequence belongs to the NAPRTase family. Post-translationally, transiently phosphorylated on a His residue during the reaction cycle. Phosphorylation strongly increases the affinity for substrates and increases the rate of nicotinate D-ribonucleotide production. Dephosphorylation regenerates the low-affinity form of the enzyme, leading to product release.

It carries out the reaction nicotinate + 5-phospho-alpha-D-ribose 1-diphosphate + ATP + H2O = nicotinate beta-D-ribonucleotide + ADP + phosphate + diphosphate. It functions in the pathway cofactor biosynthesis; NAD(+) biosynthesis; nicotinate D-ribonucleotide from nicotinate: step 1/1. Functionally, catalyzes the synthesis of beta-nicotinate D-ribonucleotide from nicotinate and 5-phospho-D-ribose 1-phosphate at the expense of ATP. The sequence is that of Nicotinate phosphoribosyltransferase from Desulforapulum autotrophicum (strain ATCC 43914 / DSM 3382 / VKM B-1955 / HRM2) (Desulfobacterium autotrophicum).